The chain runs to 153 residues: Deoxyuridine 5'-triphosphate nucleotidohydrolase (153 aa).

Substrate-binding positions include 71 to 73, Asn-84, 88 to 90, and Lys-98; these read RSG and TID.

Belongs to the dUTPase family. Mg(2+) serves as cofactor.

It catalyses the reaction dUTP + H2O = dUMP + diphosphate + H(+). It functions in the pathway pyrimidine metabolism; dUMP biosynthesis; dUMP from dCTP (dUTP route): step 2/2. This enzyme is involved in nucleotide metabolism: it produces dUMP, the immediate precursor of thymidine nucleotides and it decreases the intracellular concentration of dUTP so that uracil cannot be incorporated into DNA. This chain is Deoxyuridine 5'-triphosphate nucleotidohydrolase, found in Wolbachia pipientis wMel.